Reading from the N-terminus, the 618-residue chain is Putative UDP-glucuronate:xylan alpha-glucuronosyltransferase 3 (618 aa).

The helical; Signal-anchor for type II membrane protein transmembrane segment at 32–54 threads the bilayer; that stretch reads GVKFNTLKLVLICIMLGALFTIY. Residues Asp-379 and Asp-381 each coordinate Mn(2+). Residues 379–381, 408–410, 435–439, and 489–495 each bind substrate; these read DAD, NSG, NGGDQ, and HYLGYNK. His-489 is a binding site for Mn(2+). Residues 598–608 are compositionally biased toward low complexity; that stretch reads TNNSSTTTTSS. A disordered region spans residues 598 to 618; it reads TNNSSTTTTSSPPHKTALPSL.

This sequence belongs to the glycosyltransferase 8 family. Glycogenin subfamily. It depends on Mn(2+) as a cofactor.

Its subcellular location is the golgi apparatus membrane. Its function is as follows. May be involved in the substitutions of the xylan backbone in stem glucuronoxylan. The protein is Putative UDP-glucuronate:xylan alpha-glucuronosyltransferase 3 (GUX3) of Arabidopsis thaliana (Mouse-ear cress).